Here is a 457-residue protein sequence, read N- to C-terminus: Argininosuccinate lyase (457 aa).

Belongs to the lyase 1 family. Argininosuccinate lyase subfamily.

It localises to the cytoplasm. It catalyses the reaction 2-(N(omega)-L-arginino)succinate = fumarate + L-arginine. Its pathway is amino-acid biosynthesis; L-arginine biosynthesis; L-arginine from L-ornithine and carbamoyl phosphate: step 3/3. The protein is Argininosuccinate lyase of Pectobacterium carotovorum subsp. carotovorum (strain PC1).